The following is a 203-amino-acid chain: Translation initiation factor IF-3 (203 aa).

The protein belongs to the IF-3 family. As to quaternary structure, monomer.

Its subcellular location is the cytoplasm. Functionally, IF-3 binds to the 30S ribosomal subunit and shifts the equilibrium between 70S ribosomes and their 50S and 30S subunits in favor of the free subunits, thus enhancing the availability of 30S subunits on which protein synthesis initiation begins. The polypeptide is Translation initiation factor IF-3 (Corynebacterium efficiens (strain DSM 44549 / YS-314 / AJ 12310 / JCM 11189 / NBRC 100395)).